We begin with the raw amino-acid sequence, 122 residues long: MALRNAILRHLRVPVQTLGLNQSKIGFLGTIRSFSSHDDHLSREAVVDRVLDVVKSFPKVDPSKVTPEVHFQNDLGLDSLDTVEIVMAIEEEFKLEIPDKEADKIDSCSLAIEYVYNHPMSS.

The transit peptide at 1 to 34 directs the protein to the mitochondrion; sequence MALRNAILRHLRVPVQTLGLNQSKIGFLGTIRSF. Residues 44-119 form the Carrier domain; that stretch reads EAVVDRVLDV…LAIEYVYNHP (76 aa). S79 is subject to O-(pantetheine 4'-phosphoryl)serine.

Belongs to the acyl carrier protein (ACP) family. Complex I is composed of at least 49 different subunits. Post-translationally, 4'-phosphopantetheine is transferred from CoA to a specific serine of the apo-ACP-like protein.

It localises to the mitochondrion. The protein operates within lipid metabolism; fatty acid biosynthesis. Its function is as follows. Carrier of the growing fatty acid chain in fatty acid biosynthesis. May be involved in the synthesis of short and medium chain fatty acids. Accessory and non-catalytic subunit of the mitochondrial membrane respiratory chain NADH dehydrogenase (Complex I), which functions in the transfer of electrons from NADH to the respiratory chain. This chain is Acyl carrier protein 1, mitochondrial (MTACP1), found in Arabidopsis thaliana (Mouse-ear cress).